The chain runs to 303 residues: MYYGFDIGGTKIALGVFDSTRRLQWEKRVPTPHTSYSAFLDAVCELVAEADQRFGVKGSVGIGIPGMPETEDGTLYAANVPAASGKPLRADLSARLDRDVRLDNDANCFALSEAWDDEFTQYPLVMGLILGTGVGGGLVLNGKPITGQSYITGEFGHMRLPVDALTLMGFDFPLRRCGCGQMGCIENYLSGRGFAWLYQHYYDQSLQAPEIIALWEQGDEQAQAHVERYLNLLAVCLGNILTIVDPDLLVIGGGLSNFTAITTQLAERLPRHLLPVARAPRIERARHGDAGGMRGAAFLHLTD.

Residues 4-11 (GFDIGGTK) and 133-140 (GVGGGLVL) contribute to the ATP site. H157, C177, C179, and C184 together coordinate Zn(2+).

This sequence belongs to the ROK (NagC/XylR) family. NagK subfamily.

The enzyme catalyses N-acetyl-D-glucosamine + ATP = N-acetyl-D-glucosamine 6-phosphate + ADP + H(+). It participates in cell wall biogenesis; peptidoglycan recycling. Its function is as follows. Catalyzes the phosphorylation of N-acetyl-D-glucosamine (GlcNAc) derived from cell-wall degradation, yielding GlcNAc-6-P. This chain is N-acetyl-D-glucosamine kinase, found in Salmonella paratyphi B (strain ATCC BAA-1250 / SPB7).